A 40-amino-acid chain; its full sequence is Large ribosomal subunit protein bL36B (40 aa).

The protein belongs to the bacterial ribosomal protein bL36 family.

This chain is Large ribosomal subunit protein bL36B, found in Clavibacter michiganensis subsp. michiganensis (strain NCPPB 382).